The sequence spans 226 residues: MNPIVINRLQRKLGYTFQHHELLQQALTHRSASSKHNERLEFLGDSILSYVIANALYHRFPRVDEGDMSRMRATLVRGNTLAEIAREFELGECLRLGPGELKSGGFRRESILADTVEALIGGVFLDSDIQTVEQLILNWYQTRLDEISPGDKQKDPKTRLQEYLQGRHLPLPSYLVVQVRGEAHDQEFTIHCQVSGLSEPVVGTGSSRRKAEQAAAEQALKMLELE.

Residues 6–128 (INRLQRKLGY…LIGGVFLDSD (123 aa)) enclose the RNase III domain. Glu-41 provides a ligand contact to Mg(2+). Residue Asp-45 is part of the active site. Positions 114 and 117 each coordinate Mg(2+). Glu-117 is a catalytic residue. The DRBM domain maps to 155 to 225 (DPKTRLQEYL…AEQALKMLEL (71 aa)).

The protein belongs to the ribonuclease III family. Homodimer. The cofactor is Mg(2+).

The protein resides in the cytoplasm. It carries out the reaction Endonucleolytic cleavage to 5'-phosphomonoester.. Its function is as follows. Digests double-stranded RNA. Involved in the processing of primary rRNA transcript to yield the immediate precursors to the large and small rRNAs (23S and 16S). Processes some mRNAs, and tRNAs when they are encoded in the rRNA operon. Processes pre-crRNA and tracrRNA of type II CRISPR loci if present in the organism. This is Ribonuclease 3 from Enterobacter sp. (strain 638).